Here is a 246-residue protein sequence, read N- to C-terminus: MLINRNIVALFALPFMASATASELSIGAGAAYNESPYRGYNENTKAIPLISYEGDTFYVRQTTLGFILSQSEKNELSLTASWMPLEFDPTDNDDYAMQQLDKRDSTAMAGVAWYHHERWGTVKASAAADVLDNSNGWVGELSVFHKMQIGRLSLTPALGVLYYDENFSDYYYGISESESRRSGLASYSAQDAWVPYVSLTAKYPIGEHVVLMASAGYSELPEEITDSPMIDRNESFTFVTGVSWRF.

Positions 1 to 21 (MLINRNIVALFALPFMASATA) are cleaved as a signal peptide.

The protein belongs to the MipA/OmpV family.

Its subcellular location is the cell outer membrane. The chain is Putative outer membrane protein YiaT (yiaT) from Escherichia coli (strain K12).